A 208-amino-acid chain; its full sequence is Large ribosomal subunit protein uL4 (208 aa).

A disordered region spans residues 45 to 84 (RQGTHKVKNRSEVRGGGKKPYRQKGTGHARQGSSRSGLMS). Positions 60–71 (GGKKPYRQKGTG) are enriched in basic residues.

The protein belongs to the universal ribosomal protein uL4 family. Part of the 50S ribosomal subunit.

Its function is as follows. One of the primary rRNA binding proteins, this protein initially binds near the 5'-end of the 23S rRNA. It is important during the early stages of 50S assembly. It makes multiple contacts with different domains of the 23S rRNA in the assembled 50S subunit and ribosome. Functionally, forms part of the polypeptide exit tunnel. The protein is Large ribosomal subunit protein uL4 of Prosthecochloris aestuarii (strain DSM 271 / SK 413).